The sequence spans 135 residues: Small ribosomal subunit protein bS6 (135 aa).

Positions 99–135 (EKSAMLSHLDRNAHAGQDEERSRSPRRQRENAIERVE) are disordered.

Belongs to the bacterial ribosomal protein bS6 family.

Its function is as follows. Binds together with bS18 to 16S ribosomal RNA. The polypeptide is Small ribosomal subunit protein bS6 (Bartonella tribocorum (strain CIP 105476 / IBS 506)).